The following is a 236-amino-acid chain: 2-phospho-L-lactate guanylyltransferase (236 aa).

The protein belongs to the CofC family. As to quaternary structure, homodimer.

The enzyme catalyses (2S)-2-phospholactate + GTP + H(+) = (2S)-lactyl-2-diphospho-5'-guanosine + diphosphate. The protein operates within cofactor biosynthesis; coenzyme F420 biosynthesis. Guanylyltransferase that catalyzes the activation of (2S)-2-phospholactate (2-PL) as (2S)-lactyl-2-diphospho-5'-guanosine, via the condensation of 2-PL with GTP. It is involved in the biosynthesis of coenzyme F420, a hydride carrier cofactor. This chain is 2-phospho-L-lactate guanylyltransferase, found in Natrialba magadii (strain ATCC 43099 / DSM 3394 / CCM 3739 / CIP 104546 / IAM 13178 / JCM 8861 / NBRC 102185 / NCIMB 2190 / MS3) (Natronobacterium magadii).